The following is a 261-amino-acid chain: 1,6-dihydroxycyclohexa-2,4-diene-1-carboxylate dehydrogenase (261 aa).

13 to 37 (IVTGAAQGIGRGVALRIAQEGGCLI) is an NAD(+) binding site. Ser145 contacts substrate. Tyr156 serves as the catalytic Proton acceptor.

Belongs to the short-chain dehydrogenases/reductases (SDR) family. In terms of assembly, homodimer.

The catalysed reaction is (1R,6S)-1,6-dihydroxycyclohexa-2,4-diene-1-carboxylate + NAD(+) = catechol + CO2 + NADH. The protein operates within aromatic compound metabolism; benzoate degradation via hydroxylation; catechol from benzoate: step 2/2. In terms of biological role, degradation of 2-hydro-1,2-dihydroxy benzoate (DHB) to catechol. This chain is 1,6-dihydroxycyclohexa-2,4-diene-1-carboxylate dehydrogenase (benD), found in Acinetobacter baylyi (strain ATCC 33305 / BD413 / ADP1).